Reading from the N-terminus, the 188-residue chain is Inosine triphosphate pyrophosphatase (188 aa).

An ITP-binding site is contributed by 9–14 (TGNAKK). Glutamate 39 provides a ligand contact to Mg(2+). ITP-binding positions include lysine 51, 67–68 (DT), lysine 84, 143–146 (FGWD), lysine 166, and 171–172 (HR).

The protein belongs to the HAM1 NTPase family. As to quaternary structure, homodimer. Mg(2+) is required as a cofactor. Mn(2+) serves as cofactor.

The protein localises to the cytoplasm. It catalyses the reaction ITP + H2O = IMP + diphosphate + H(+). The enzyme catalyses dITP + H2O = dIMP + diphosphate + H(+). It carries out the reaction XTP + H2O = XMP + diphosphate + H(+). In terms of biological role, pyrophosphatase that hydrolyzes non-canonical purine nucleotides such as inosine triphosphate (ITP), deoxyinosine triphosphate (dITP) or xanthosine 5'-triphosphate (XTP) to their respective monophosphate derivatives. The enzyme does not distinguish between the deoxy- and ribose forms. Probably excludes non-canonical purines from RNA and DNA precursor pools, thus preventing their incorporation into RNA and DNA and avoiding chromosomal lesions. The sequence is that of Inosine triphosphate pyrophosphatase from Anopheles gambiae (African malaria mosquito).